The chain runs to 196 residues: Large ribosomal subunit protein uL10 (196 aa).

Residues 169–196 form a disordered region; it reads KAAECPAEAPQPAAETPAEAPEAPADAE. Over residues 172 to 196 the composition is skewed to low complexity; it reads ECPAEAPQPAAETPAEAPEAPADAE.

This sequence belongs to the universal ribosomal protein uL10 family. In terms of assembly, part of the ribosomal stalk of the 50S ribosomal subunit. The N-terminus interacts with L11 and the large rRNA to form the base of the stalk. The C-terminus forms an elongated spine to which L12 dimers bind in a sequential fashion forming a multimeric L10(L12)X complex.

Functionally, forms part of the ribosomal stalk, playing a central role in the interaction of the ribosome with GTP-bound translation factors. The sequence is that of Large ribosomal subunit protein uL10 from Mycobacterium avium (strain 104).